Here is a 129-residue protein sequence, read N- to C-terminus: M-zodatoxin-Lt8i (129 aa).

An N-terminal signal peptide occupies residues 1-20 (MKYFVVALALVAAFACIAES). A propeptide spanning residues 21-60 (KPAESEHELAEVEEENELADLEDAVWLEHLADLSDLEEAR) is cleaved from the precursor.

It belongs to the cationic peptide 06 (cytoinsectotoxin) family. In terms of tissue distribution, expressed by the venom gland.

It is found in the secreted. Its function is as follows. Insecticidal, cytolytic and antimicrobial peptide. Forms voltage-dependent, ion-permeable channels in membranes. At high concentration causes cell membrane lysis. This Lachesana tarabaevi (Spider) protein is M-zodatoxin-Lt8i (cit 1-6).